A 986-amino-acid polypeptide reads, in one-letter code: Epidermin biosynthesis protein EpiB (986 aa).

To B.subtilis SpaB and L.lactis NisB.

Its subcellular location is the cell membrane. Its function is as follows. Involved in the post-translational modification of the lantibiotic epidermin. The polypeptide is Epidermin biosynthesis protein EpiB (epiB) (Staphylococcus epidermidis).